A 343-amino-acid polypeptide reads, in one-letter code: Cell cycle control protein 50C (343 aa).

Residues 1–34 are Cytoplasmic-facing; it reads MKRKCQDYESRLPDNTAVKQQQLPAFRLQLTASE. The helical transmembrane segment at 35–55 threads the bilayer; sequence ILSGFFAIGLFCLGMGIILLL. Residues 56-306 are Extracellular-facing; that stretch reads SAKSIKEVEI…STLTWSGGSS (251 aa). N-linked (GlcNAc...) asparagine glycans are attached at residues Asn66, Asn164, Asn205, and Asn265. A helical membrane pass occupies residues 307 to 327; the sequence is LFLALAYLVTGAVTLLASFSM. Over 328 to 343 the chain is Cytoplasmic; the sequence is MALHLKLKERKTFFLQ.

This sequence belongs to the CDC50/LEM3 family.

The protein localises to the membrane. This chain is Cell cycle control protein 50C (TMEM30C), found in Bos taurus (Bovine).